The primary structure comprises 233 residues: Phytol kinase (233 aa).

The next 6 helical transmembrane spans lie at 9–29 (MALP…AVVL), 56–76 (VVLI…AGVF), 96–118 (VGRH…GGFF), 122–144 (LPIF…ALVG), 172–192 (FLVT…VLVV), and 213–233 (NLTV…LWLG).

Belongs to the polyprenol kinase family.

It is found in the cell membrane. It carries out the reaction phytol + CTP = phytyl phosphate + CDP + H(+). The protein operates within cofactor biosynthesis; tocopherol biosynthesis. Catalyzes the CTP-dependent phosphorylation of phytol to phytylmonophosphate (PMP). Can also use UTP as an alternative phosphate donor, but not ATP or GTP. Is involved in tocopherol biosynthesis, via the utilization of phytol generated by chlorophyll degradation. Also plays a significant but not critical role in the recycling of phytol for the biosynthesis of new chlorophyll molecules. The protein is Phytol kinase of Synechocystis sp. (strain ATCC 27184 / PCC 6803 / Kazusa).